The chain runs to 209 residues: Uracil phosphoribosyltransferase (209 aa).

5-phospho-alpha-D-ribose 1-diphosphate is bound by residues Arg79, Arg104, and 131 to 139 (DPMLATGGS). Uracil-binding positions include Ile194 and 199 to 201 (GDA). 5-phospho-alpha-D-ribose 1-diphosphate is bound at residue Asp200.

The protein belongs to the UPRTase family. Mg(2+) is required as a cofactor.

The enzyme catalyses UMP + diphosphate = 5-phospho-alpha-D-ribose 1-diphosphate + uracil. The protein operates within pyrimidine metabolism; UMP biosynthesis via salvage pathway; UMP from uracil: step 1/1. With respect to regulation, allosterically activated by GTP. Functionally, catalyzes the conversion of uracil and 5-phospho-alpha-D-ribose 1-diphosphate (PRPP) to UMP and diphosphate. This chain is Uracil phosphoribosyltransferase, found in Agathobacter rectalis (strain ATCC 33656 / DSM 3377 / JCM 17463 / KCTC 5835 / VPI 0990) (Eubacterium rectale).